Reading from the N-terminus, the 107-residue chain is uncharacterized protein (107 aa).

The signal sequence occupies residues 1 to 18 (MRTLMLIILSILIYLSSA).

This is an uncharacterized protein from Caenorhabditis elegans.